A 496-amino-acid chain; its full sequence is Lysine--tRNA ligase (496 aa).

Residues Glu-409 and Glu-416 each coordinate Mg(2+).

Belongs to the class-II aminoacyl-tRNA synthetase family. Homodimer. Requires Mg(2+) as cofactor.

The protein resides in the cytoplasm. It catalyses the reaction tRNA(Lys) + L-lysine + ATP = L-lysyl-tRNA(Lys) + AMP + diphosphate. This Streptococcus mutans serotype c (strain ATCC 700610 / UA159) protein is Lysine--tRNA ligase.